The following is a 105-amino-acid chain: UPF0235 protein RT0827 (105 aa).

It belongs to the UPF0235 family.

This chain is UPF0235 protein RT0827, found in Rickettsia typhi (strain ATCC VR-144 / Wilmington).